The chain runs to 183 residues: Peptide deformylase (183 aa).

Cysteine 110 and histidine 153 together coordinate Fe cation. Residue glutamate 154 is part of the active site. Histidine 157 provides a ligand contact to Fe cation.

This sequence belongs to the polypeptide deformylase family. Fe(2+) is required as a cofactor.

The catalysed reaction is N-terminal N-formyl-L-methionyl-[peptide] + H2O = N-terminal L-methionyl-[peptide] + formate. Functionally, removes the formyl group from the N-terminal Met of newly synthesized proteins. Requires at least a dipeptide for an efficient rate of reaction. N-terminal L-methionine is a prerequisite for activity but the enzyme has broad specificity at other positions. The sequence is that of Peptide deformylase from Listeria monocytogenes serovar 1/2a (strain ATCC BAA-679 / EGD-e).